A 222-amino-acid polypeptide reads, in one-letter code: Vespryn (222 aa).

A signal peptide spans 1 to 44 (MSPSAGLQFSLYFLQTKKVLWKLTDKEKGLCYILLFTLCFFADQ). Positions 45–52 (ENGGKALA) are excised as a propeptide. The region spanning 53 to 159 (SPPGIWKRAD…RIWQMGLWWL (107 aa)) is the B30.2/SPRY domain. The propeptide occupies 160-222 (RHLETDPGRV…LGGTVSLTTL (63 aa)). A glycan (N-linked (GlcNAc...) asparagine) is linked at Asn195.

This sequence belongs to the ohanin/vespryn family. As to expression, expressed by the venom gland.

The protein resides in the secreted. Its function is as follows. Neurotoxin that produces dose-dependent hypolocomotion and hyperalgesia in mice. May directly act on the central nervous system, as it is 6500-fold more potent when administered intracerebroventricularly than intraperitoneal. The chain is Vespryn from Crotalus adamanteus (Eastern diamondback rattlesnake).